A 533-amino-acid polypeptide reads, in one-letter code: Yeast-form wall Protein 1 (533 aa).

An N-terminal signal peptide occupies residues 1-21 (MKVSTIFAAASALFAATTTLA). The N-linked (GlcNAc...) asparagine glycan is linked to Asn-115. 2 disordered regions span residues 161 to 219 (YVPG…GEST) and 418 to 451 (PTKG…AHAS). Composition is skewed to low complexity over residues 163-214 (PGSS…ATGA) and 427-451 (PGSP…AHAS). Gly-511 carries GPI-anchor amidated glycine lipidation. A propeptide spans 512–533 (AAAASAGASVLALALIPLAYFI) (removed in mature form).

Belongs to the flocculin family. Post-translationally, the GPI-anchor is attached to the protein in the endoplasmic reticulum and serves to target the protein to the cell surface. There, the glucosamine-inositol phospholipid moiety is cleaved off and the GPI-modified mannoprotein is covalently attached via its lipidless GPI glycan remnant to the 1,6-beta-glucan of the outer cell wall layer. In terms of processing, cleaved by SAP9 and SAP10, which leads to its release from the cell wall. N-glycosylated.

It localises to the secreted. The protein localises to the cell wall. The protein resides in the membrane. Its function is as follows. Cell wall protein which plays an anti-adhesive role and promotes dispersal of yeast forms, which allows the organism to seek new sites for colonization. The sequence is that of Yeast-form wall Protein 1 (YWP1) from Candida albicans (strain SC5314 / ATCC MYA-2876) (Yeast).